A 385-amino-acid chain; its full sequence is Glucose-fructose oxidoreductase domain-containing protein 2 (385 aa).

Residues 1-25 (MKMLPGVGVFGTGSSARVLVPLLRA) form the signal peptide.

Belongs to the Gfo/Idh/MocA family.

It is found in the secreted. It localises to the extracellular space. The protein localises to the extracellular matrix. Its function is as follows. Promotes matrix assembly. This is Glucose-fructose oxidoreductase domain-containing protein 2 (GFOD2) from Homo sapiens (Human).